The chain runs to 215 residues: Cytochrome b6 (215 aa).

Residues 32 to 52 (IFYCLGGITLTCFLVQVATGF) form a helical membrane-spanning segment. Residue Cys-35 coordinates heme c. 2 residues coordinate heme b: His-86 and His-100. A run of 3 helical transmembrane segments spans residues 90–110 (ASMMVLMMILHVFRVYLTGGF), 116–136 (LTWITGVILAVLTVSFGVTGY), and 186–206 (LHTFVLPLLTAVFMLMHFLMI). The heme b site is built by His-187 and His-202.

This sequence belongs to the cytochrome b family. PetB subfamily. As to quaternary structure, the 4 large subunits of the cytochrome b6-f complex are cytochrome b6, subunit IV (17 kDa polypeptide, PetD), cytochrome f and the Rieske protein, while the 4 small subunits are PetG, PetL, PetM and PetN. The complex functions as a dimer. Requires heme b as cofactor. Heme c is required as a cofactor.

The protein resides in the plastid. The protein localises to the chloroplast thylakoid membrane. Its function is as follows. Component of the cytochrome b6-f complex, which mediates electron transfer between photosystem II (PSII) and photosystem I (PSI), cyclic electron flow around PSI, and state transitions. This Psilotum nudum (Whisk fern) protein is Cytochrome b6.